The sequence spans 296 residues: Glycine--tRNA ligase alpha subunit (296 aa).

The protein belongs to the class-II aminoacyl-tRNA synthetase family. Tetramer of two alpha and two beta subunits.

Its subcellular location is the cytoplasm. The enzyme catalyses tRNA(Gly) + glycine + ATP = glycyl-tRNA(Gly) + AMP + diphosphate. In Listeria welshimeri serovar 6b (strain ATCC 35897 / DSM 20650 / CCUG 15529 / CIP 8149 / NCTC 11857 / SLCC 5334 / V8), this protein is Glycine--tRNA ligase alpha subunit.